Here is a 514-residue protein sequence, read N- to C-terminus: MQQLNPSEISEIIKGRIDNLDVSSQARNEGTVVSVSDGIVRIHGLADVMYGEMIEFPGSVYGMALNLEQDSVGAVILGAYDTLAEGMSAKCTGRILEVPVGKELLGRVVDALGNPIDGKGPLGNTQTDAVEKVAPGVIWRKSVDQPVQTGYKSVDAMIPVGRGQRELIIGDRQIGKTAMAIDAIINQKDSGIFCVYVAVGQKRSTVANIVRKLEETGALANTIVVVASASESAALQFLAPYAGCTMGEFFRDRGEDALIVYDDLSKQAVAYRQISLLLRRPPGREAYPGDVFYLHSRLLERASRVSEEYVEKFTNGAVTGKTGSLTALPIIETQAGDVSAFVPTNVISITDGQIFLESAMFNSGIRPAVNAGVSVSRVGGAAQTKIIKKLSGGIRTALAQYRELAAFAQFASDLDEATRKQLEHGQRVTELMKQKQYAPMSIADMALSLYAAERGFLIDVEVSKIGSFEQALIAFFNRDHAELMAKINVKGDFNDEIDAGLKAGIEKFKATQTW.

ATP is bound at residue 170–177; sequence GDRQIGKT.

It belongs to the ATPase alpha/beta chains family. F-type ATPases have 2 components, CF(1) - the catalytic core - and CF(0) - the membrane proton channel. CF(1) has five subunits: alpha(3), beta(3), gamma(1), delta(1), epsilon(1). CF(0) has three main subunits: a(1), b(2) and c(9-12). The alpha and beta chains form an alternating ring which encloses part of the gamma chain. CF(1) is attached to CF(0) by a central stalk formed by the gamma and epsilon chains, while a peripheral stalk is formed by the delta and b chains.

The protein localises to the cell inner membrane. It carries out the reaction ATP + H2O + 4 H(+)(in) = ADP + phosphate + 5 H(+)(out). Its function is as follows. Produces ATP from ADP in the presence of a proton gradient across the membrane. The alpha chain is a regulatory subunit. This chain is ATP synthase subunit alpha, found in Pseudomonas putida (strain ATCC 47054 / DSM 6125 / CFBP 8728 / NCIMB 11950 / KT2440).